We begin with the raw amino-acid sequence, 98 residues long: Aspartyl/glutamyl-tRNA(Asn/Gln) amidotransferase subunit C (98 aa).

The interval 75-98 is disordered; it reads EQALSGAPDSDDNRFKVPAILDEA.

It belongs to the GatC family. Heterotrimer of A, B and C subunits.

It catalyses the reaction L-glutamyl-tRNA(Gln) + L-glutamine + ATP + H2O = L-glutaminyl-tRNA(Gln) + L-glutamate + ADP + phosphate + H(+). The enzyme catalyses L-aspartyl-tRNA(Asn) + L-glutamine + ATP + H2O = L-asparaginyl-tRNA(Asn) + L-glutamate + ADP + phosphate + 2 H(+). In terms of biological role, allows the formation of correctly charged Asn-tRNA(Asn) or Gln-tRNA(Gln) through the transamidation of misacylated Asp-tRNA(Asn) or Glu-tRNA(Gln) in organisms which lack either or both of asparaginyl-tRNA or glutaminyl-tRNA synthetases. The reaction takes place in the presence of glutamine and ATP through an activated phospho-Asp-tRNA(Asn) or phospho-Glu-tRNA(Gln). This is Aspartyl/glutamyl-tRNA(Asn/Gln) amidotransferase subunit C from Pseudarthrobacter chlorophenolicus (strain ATCC 700700 / DSM 12829 / CIP 107037 / JCM 12360 / KCTC 9906 / NCIMB 13794 / A6) (Arthrobacter chlorophenolicus).